The following is a 222-amino-acid chain: Protein Thf1 (222 aa).

Residues 169–208 (IEKVKRDLELYRSNLDKINQARSLMKELVEQERKRRAQQT) adopt a coiled-coil conformation. A disordered region spans residues 197-222 (VEQERKRRAQQTSAPPAVDASSDAPA). A compositionally biased stretch (low complexity) spans 209 to 222 (SAPPAVDASSDAPA).

It belongs to the THF1 family.

May be involved in photosynthetic membrane biogenesis. This chain is Protein Thf1, found in Thermosynechococcus vestitus (strain NIES-2133 / IAM M-273 / BP-1).